Here is a 1173-residue protein sequence, read N- to C-terminus: Clustered mitochondria protein homolog (1173 aa).

Residues 1–21 (MSTIDLPTSSLPGSSGDPSGT) are compositionally biased toward low complexity. The tract at residues 1–25 (MSTIDLPTSSLPGSSGDPSGTEMSH) is disordered. A Clu domain is found at 316-565 (VPHRADLSRT…SLFPLDAQFL (250 aa)). Positions 888 to 910 (KFTGKKGNKKKRNLGKSQNTTNR) are disordered. The segment covering 890–901 (TGKKGNKKKRNL) has biased composition (basic residues). The TPR repeat unit spans residues 984 to 1017 (ARAYCQLAMIYHQLEKKEEAVELARKAVIVCERF).

Belongs to the CLU family. May associate with the eukaryotic translation initiation factor 3 (eIF-3) complex.

The protein resides in the cytoplasm. MRNA-binding protein involved in proper cytoplasmic distribution of mitochondria. This is Clustered mitochondria protein homolog from Schizosaccharomyces pombe (strain 972 / ATCC 24843) (Fission yeast).